Here is a 118-residue protein sequence, read N- to C-terminus: UPF0102 protein RHA1_ro06551 (118 aa).

The protein belongs to the UPF0102 family.

In Rhodococcus jostii (strain RHA1), this protein is UPF0102 protein RHA1_ro06551.